The sequence spans 344 residues: Sensor histidine kinase GraS (344 aa).

Helical transmembrane passes span 18 to 38 (IFWI…DYDI) and 43 to 63 (IGFI…FTFL). The Histidine kinase domain maps to 126-332 (EFVHDIKTPV…TFVLTFPKQN (207 aa)). His129 is modified (phosphohistidine; by autocatalysis).

Post-translationally, autophosphorylated.

Its subcellular location is the cell membrane. It catalyses the reaction ATP + protein L-histidine = ADP + protein N-phospho-L-histidine.. Member of the two-component regulatory system GraR/GraS involved in resistance against cationic antimicrobial peptides (CAMPs). GraS probably functions as a sensor protein kinase which is autophosphorylated at a histidine residue and transfers its phosphate group to GraR. The chain is Sensor histidine kinase GraS (graS) from Staphylococcus haemolyticus (strain JCSC1435).